We begin with the raw amino-acid sequence, 582 residues long: Cryptochrome DASH, chloroplastic/mitochondrial (582 aa).

The transit peptide at 1–49 (MLHFLSSSSPLNPQFLLLPRQSARLRVLLSIPVSAMSSSSSSSSRGALA) directs the protein to the chloroplast and mitochondrion. The Photolyase/cryptochrome alpha/beta domain occupies 84–234 (GVAIVWFRND…KLQLIWGATL (151 aa)). Positions 560–582 (GHQKRDQQFNRQRRPGHMYRRQK) are disordered. Positions 570–582 (RQRRPGHMYRRQK) are enriched in basic residues.

This sequence belongs to the DNA photolyase class-1 family. It depends on FAD as a cofactor. The cofactor is (6R)-5,10-methylene-5,6,7,8-tetrahydrofolate.

The protein resides in the plastid. It is found in the chloroplast. Its subcellular location is the mitochondrion. May have a photoreceptor function. Binds ss- and ds-DNA in a sequence non-specific manner, lacks photolyase activity. In Oryza sativa subsp. japonica (Rice), this protein is Cryptochrome DASH, chloroplastic/mitochondrial (CRYD).